Consider the following 165-residue polypeptide: Crossover junction endodeoxyribonuclease RuvC (165 aa).

Residues D7, E67, and D140 contribute to the active site. D7, E67, and D140 together coordinate Mg(2+).

The protein belongs to the RuvC family. Homodimer which binds Holliday junction (HJ) DNA. The HJ becomes 2-fold symmetrical on binding to RuvC with unstacked arms; it has a different conformation from HJ DNA in complex with RuvA. In the full resolvosome a probable DNA-RuvA(4)-RuvB(12)-RuvC(2) complex forms which resolves the HJ. Requires Mg(2+) as cofactor.

The protein resides in the cytoplasm. It catalyses the reaction Endonucleolytic cleavage at a junction such as a reciprocal single-stranded crossover between two homologous DNA duplexes (Holliday junction).. Its function is as follows. The RuvA-RuvB-RuvC complex processes Holliday junction (HJ) DNA during genetic recombination and DNA repair. Endonuclease that resolves HJ intermediates. Cleaves cruciform DNA by making single-stranded nicks across the HJ at symmetrical positions within the homologous arms, yielding a 5'-phosphate and a 3'-hydroxyl group; requires a central core of homology in the junction. The consensus cleavage sequence is 5'-(A/T)TT(C/G)-3'. Cleavage occurs on the 3'-side of the TT dinucleotide at the point of strand exchange. HJ branch migration catalyzed by RuvA-RuvB allows RuvC to scan DNA until it finds its consensus sequence, where it cleaves and resolves the cruciform DNA. This is Crossover junction endodeoxyribonuclease RuvC from Halothermothrix orenii (strain H 168 / OCM 544 / DSM 9562).